We begin with the raw amino-acid sequence, 229 residues long: Aquaporin Z (229 aa).

2 helical membrane-spanning segments follow: residues 8–28 (FLGT…AAGF) and 33–53 (IGFA…AYAI). The short motif at 62–64 (NPA) is the NPA 1 element. The next 3 membrane-spanning stretches (helical) occupy residues 88–108 (VLGA…GAGF), 129–149 (LLAA…VIMG), and 158–178 (GFAP…SIPV). The short motif at 184-186 (NPA) is the NPA 2 element. Residues 192–212 (ALFVGGWAVQQLWLFWLAPII) traverse the membrane as a helical segment.

It belongs to the MIP/aquaporin (TC 1.A.8) family. As to quaternary structure, homotetramer.

The protein resides in the cell inner membrane. The enzyme catalyses H2O(in) = H2O(out). Its function is as follows. Channel that permits osmotically driven movement of water in both directions. It is involved in the osmoregulation and in the maintenance of cell turgor during volume expansion in rapidly growing cells. It mediates rapid entry or exit of water in response to abrupt changes in osmolarity. The chain is Aquaporin Z from Chromobacterium violaceum (strain ATCC 12472 / DSM 30191 / JCM 1249 / CCUG 213 / NBRC 12614 / NCIMB 9131 / NCTC 9757 / MK).